A 319-amino-acid chain; its full sequence is mRNA decay activator protein ZFP36 (319 aa).

Residues 1–15 are necessary for nuclear export; it reads MDLSAIYESLQSMSH. Residues 1–92 form a necessary and sufficient for the association with mRNA decay enzymes and mRNA decay activation region; it reads MDLSAIYESL…PTSPTATPTT (92 aa). 2 necessary for localization of ARE-containing mRNAs to processing bodies (PBs) regions span residues 1-166 and 92-319; these read MDLS…DLAL and TSSR…SVSE. Serine 52 carries the phosphoserine; by MAPKAPK2 modification. Serine 58 carries the phosphoserine modification. The P-P-P-P-G repeat unit spans residues 63–67; that stretch reads PPPPG. Pro residues predominate over residues 65 to 84; it reads PPGFAPLAPRPGPELSPSPT. A disordered region spans residues 65–95; the sequence is PPGFAPLAPRPGPELSPSPTSPTATPTTSSR. Residues serine 80 and serine 82 each carry the phosphoserine modification. Threonine 84 bears the Phosphothreonine mark. The residue at position 85 (serine 85) is a Phosphoserine. Over residues 85-94 the composition is skewed to low complexity; that stretch reads SPTATPTTSS. The interval 87–160 is necessary for nuclear localization; it reads TATPTTSSRY…GSRCHFIHNP (74 aa). The segment at 89 to 165 is necessary for RNA-binding; sequence TPTTSSRYKT…FIHNPTEDLA (77 aa). 2 C3H1-type zinc fingers span residues 95-123 and 133-161; these read RYKTELCRTYSESGRCRYGAKCQFAHGLG and KYKTELCHKFYLQGRCPYGSRCHFIHNPT. The segment at 95-186 is necessary for interaction with PABPN1; sequence RYKTELCRTY…ISFSGLPSGR (92 aa). A necessary for mRNA decay activation region spans residues 166 to 319; the sequence is LPGQPHVLRQ…PIFNRISVSE (154 aa). Serine 178 carries the post-translational modification Phosphoserine; by MAPKAPK2. The segment covering 179-188 has biased composition (low complexity); that stretch reads FSGLPSGRRS. The interval 179–309 is disordered; sequence FSGLPSGRRS…PQTPAPPRRL (131 aa). Position 189 is a phosphoserine (serine 189). Residues 190-194 form a P-P-P-P-G repeat; it reads PPPPG. Residues 196 to 208 show a composition bias toward low complexity; that stretch reads SGPSLSSCSFSPS. The residue at position 210 (serine 210) is a Phosphoserine. The stretch at 211 to 215 is one P-P-P-P-G repeat; that stretch reads PPPPG. Residue serine 220 is modified to Phosphoserine; by MAPK1; in vitro. At threonine 250 the chain carries Phosphothreonine. A phosphoserine mark is found at serine 269, serine 289, and serine 316. A compositionally biased stretch (low complexity) spans 279-289; the sequence is SSGSSLGGSDS. Residues 305-319 form an interaction with CNOT1 region; it reads PPRRLPIFNRISVSE.

In terms of assembly, associates with cytoplasmic CCR4-NOT and PAN2-PAN3 deadenylase complexes to trigger ARE-containing mRNA deadenylation and decay processes. Part of a mRNA decay activation complex at least composed of poly(A)-specific exoribonucleases CNOT6, EXOSC2 and XRN1 and mRNA-decapping enzymes DCP1A and DCP2. Associates with the RNA exosome complex. Interacts (via phosphorylated form) with 14-3-3 proteins; these interactions promote exclusion of ZFP36 from cytoplasmic stress granules in response to arsenite treatment in a MAPKAPK2-dependent manner and does not prevent CCR4-NOT deadenylase complex recruitment or ZFP36-induced ARE-containing mRNA deadenylation and decay processes. Interacts with 14-3-3 proteins; these interactions occur in response to rapamycin in an Akt-dependent manner. Interacts with AGO2 and AGO4. Interacts (via C-terminus) with CNOT1; this interaction occurs in a RNA-independent manner and induces mRNA deadenylation. Interacts (via N-terminus) with CNOT6. Interacts with CNOT6L. Interacts (via C-terminus) with CNOT7; this interaction occurs in a RNA-independent manner, induces mRNA deadenylation and is inhibited in a phosphorylation MAPKAPK2-dependent manner. Interacts (via unphosphorylated form) with CNOT8; this interaction occurs in a RNA-independent manner and is inhibited in a phosphorylation MAPKAPK2-dependent manner. Interacts with DCP1A. Interacts (via N-terminus) with DCP2. Interacts with EDC3. Interacts (via N-terminus) with EXOSC2. Interacts with heat shock 70 kDa proteins. Interacts with KHSRP; this interaction increases upon cytokine-induced treatment. Interacts with MAP3K4; this interaction enhances the association with SH3KBP1/CIN85. Interacts with MAPKAPK2; this interaction occurs upon skeletal muscle satellite cell activation. Interacts with NCL. Interacts with NUP214; this interaction increases upon lipopolysaccharide (LPS) stimulation. Interacts with PABPC1; this interaction occurs in a RNA-dependent manner. Interacts (via hypophosphorylated form) with PABPN1 (via RRM domain and C-terminal arginine-rich region); this interaction occurs in the nucleus in a RNA-independent manner, decreases in presence of single-stranded poly(A) RNA-oligomer and in a p38 MAPK-dependent-manner and inhibits nuclear poly(A) tail synthesis. Interacts with PAN2. Interacts (via C3H1-type zinc finger domains) with PKM. Interacts (via C3H1-type zinc finger domains) with nuclear RNA poly(A) polymerase. Interacts with PPP2CA; this interaction occurs in LPS-stimulated cells and induces ZFP36 dephosphorylation, and hence may promote ARE-containing mRNAs decay. Interacts (via C-terminus) with PRR5L (via C-terminus); this interaction may accelerate ZFP36-mediated mRNA decay during stress. Interacts (via C-terminus) with SFN; this interaction occurs in a phosphorylation-dependent manner. Interacts (via extreme C-terminal region) with SH3KBP1/CIN85 (via SH3 domains); this interaction enhances MAP3K4-induced phosphorylation of ZFP36 at Ser-58 and Ser-85 and does not alter neither ZFP36 binding to ARE-containing transcripts nor TNF-alpha mRNA decay. Interacts with XRN1. Interacts (via C-terminus and Ser-178 phosphorylated form) with YWHAB; this interaction occurs in a p38/MAPKAPK2-dependent manner, increases cytoplasmic localization of ZFP36 and protects ZFP36 from Ser-178 dephosphorylation by serine/threonine phosphatase 2A, and hence may be crucial for stabilizing ARE-containing mRNAs. Interacts (via phosphorylated form) with YWHAE. Interacts (via C-terminus) with YWHAG; this interaction occurs in a phosphorylation-dependent manner. Interacts with YWHAH; this interaction occurs in a phosphorylation-dependent manner. Interacts with YWHAQ; this interaction occurs in a phosphorylation-dependent manner. Interacts with (via C-terminus) YWHAZ; this interaction occurs in a phosphorylation-dependent manner. Does not interact with SH3KBP1. Interacts (via the 4EHP-binding motif) with EIF4E2; the interaction is direct. Interacts (via P-P-P-P-G repeats) with GIGYF2; the interaction is direct. Post-translationally, phosphorylated. Phosphorylation at serine and/or threonine residues occurs in a p38 MAPK- and MAPKAPK2-dependent manner. Phosphorylated by MAPKAPK2 at Ser-52 and Ser-178; phosphorylation increases its stability and cytoplasmic localization, promotes binding to 14-3-3 adapter proteins and inhibits the recruitment of cytoplasmic CCR4-NOT and PAN2-PAN3 deadenylase complexes to the mRNA decay machinery, thereby inhibiting ZFP36-induced ARE-containing mRNA deadenylation and decay processes. Phosphorylation by MAPKAPK2 does not impair ARE-containing RNA-binding. Phosphorylated in a MAPKAPK2- and p38 MAPK-dependent manner upon skeletal muscle satellite cell activation; this phosphorylation inhibits ZFP36-mediated mRNA decay activity, and hence stabilizes MYOD1 mRNA. Phosphorylated by MAPK1 upon mitogen stimulation. Phosphorylated at Ser-58 and Ser-85; these phosphorylations increase in a SH3KBP1-dependent manner. Phosphorylated at serine and threonine residues in a pyruvate kinase PKM- and p38 MAPK-dependent manner. Phosphorylation at Ser-52 may participate in the PKM-mediated degradation of ZFP36 in a p38 MAPK-dependent manner. Dephosphorylated by serine/threonine phosphatase 2A at Ser-178. In terms of processing, ubiquitinated; pyruvate kinase (PKM)-dependent ubiquitination leads to proteasomal degradation through a p38 MAPK signaling pathway. As to expression, expressed in skeletal muscle satellite cells. Strongly expressed in differentiated adipocytes compared to preadipocytes (at protein level). Expressed in embryonic stem cells (ESCs). Expressed in heart, placenta, kidney, intestine, liver, lung, thymus, fat and spleen.

It localises to the nucleus. Its subcellular location is the cytoplasm. It is found in the cytoplasmic granule. The protein localises to the P-body. Functionally, zinc-finger RNA-binding protein that destabilizes numerous cytoplasmic AU-rich element (ARE)-containing mRNA transcripts by promoting their poly(A) tail removal or deadenylation, and hence provide a mechanism for attenuating protein synthesis. Acts as an 3'-untranslated region (UTR) ARE mRNA-binding adapter protein to communicate signaling events to the mRNA decay machinery. Recruits deadenylase CNOT7 (and probably the CCR4-NOT complex) via association with CNOT1, and hence promotes ARE-mediated mRNA deadenylation. Also functions by recruiting components of the cytoplasmic RNA decay machinery to the bound ARE-containing mRNAs. Self-regulates by destabilizing its own mRNA. Binds to 3'-UTR ARE of numerous mRNAs and of its own mRNA. Plays a role in anti-inflammatory responses; suppresses tumor necrosis factor (TNF)-alpha production by stimulating ARE-mediated TNF-alpha mRNA decay and several other inflammatory ARE-containing mRNAs in interferon (IFN)- and/or lipopolysaccharide (LPS)-induced macrophages. Also plays a role in the regulation of dendritic cell maturation at the post-transcriptional level, and hence operates as part of a negative feedback loop to limit the inflammatory response. Promotes ARE-mediated mRNA decay of hypoxia-inducible factor HIF1A mRNA during the response of endothelial cells to hypoxia. Positively regulates early adipogenesis of preadipocytes by promoting ARE-mediated mRNA decay of immediate early genes (IEGs). Negatively regulates hematopoietic/erythroid cell differentiation by promoting ARE-mediated mRNA decay of the transcription factor STAT5B mRNA. Plays a role in maintaining skeletal muscle satellite cell quiescence by promoting ARE-mediated mRNA decay of the myogenic determination factor MYOD1 mRNA. Also associates with and regulates the expression of non-ARE-containing target mRNAs at the post-transcriptional level, such as MHC class I mRNAs. Participates in association with argonaute RISC catalytic components in the ARE-mediated mRNA decay mechanism; assists microRNA (miRNA) targeting ARE-containing mRNAs. May also play a role in the regulation of cytoplasmic mRNA decapping; enhances decapping of ARE-containing RNAs, in vitro. Involved in the delivery of target ARE-mRNAs to processing bodies (PBs). In addition to its cytosolic mRNA-decay function, affects nuclear pre-mRNA processing. Negatively regulates nuclear poly(A)-binding protein PABPN1-stimulated polyadenylation activity on ARE-containing pre-mRNA during LPS-stimulated macrophages. Also involved in the regulation of stress granule (SG) and P-body (PB) formation and fusion. Plays a role in the regulation of keratinocyte proliferation, differentiation and apoptosis. Plays a role as a tumor suppressor by inhibiting cell proliferation in breast cancer cells. The protein is mRNA decay activator protein ZFP36 of Mus musculus (Mouse).